The sequence spans 432 residues: Adenylosuccinate synthetase (432 aa).

GTP is bound by residues G13–K19 and G41–T43. D14 (proton acceptor) is an active-site residue. Mg(2+) contacts are provided by D14 and G41. IMP-binding positions include D14–K17, N39–H42, T130, R144, Q225, T240, and R304. H42 functions as the Proton donor in the catalytic mechanism. A300 to R306 is a substrate binding site. GTP-binding positions include R306, K332–D334, and S415–G417.

This sequence belongs to the adenylosuccinate synthetase family. In terms of assembly, homodimer. Requires Mg(2+) as cofactor.

It is found in the cytoplasm. It catalyses the reaction IMP + L-aspartate + GTP = N(6)-(1,2-dicarboxyethyl)-AMP + GDP + phosphate + 2 H(+). It functions in the pathway purine metabolism; AMP biosynthesis via de novo pathway; AMP from IMP: step 1/2. Functionally, plays an important role in the de novo pathway of purine nucleotide biosynthesis. Catalyzes the first committed step in the biosynthesis of AMP from IMP. In Actinobacillus pleuropneumoniae serotype 3 (strain JL03), this protein is Adenylosuccinate synthetase.